Reading from the N-terminus, the 376-residue chain is Putative glutamate--cysteine ligase 2 (376 aa).

This sequence belongs to the glutamate--cysteine ligase type 2 family. YbdK subfamily.

It catalyses the reaction L-cysteine + L-glutamate + ATP = gamma-L-glutamyl-L-cysteine + ADP + phosphate + H(+). In terms of biological role, ATP-dependent carboxylate-amine ligase which exhibits weak glutamate--cysteine ligase activity. This is Putative glutamate--cysteine ligase 2 from Paracoccus denitrificans (strain Pd 1222).